The chain runs to 67 residues: Large ribosomal subunit protein bL31 (67 aa).

Positions 16, 18, 36, and 39 each coordinate Zn(2+).

It belongs to the bacterial ribosomal protein bL31 family. Type A subfamily. As to quaternary structure, part of the 50S ribosomal subunit. It depends on Zn(2+) as a cofactor.

Binds the 23S rRNA. The chain is Large ribosomal subunit protein bL31 from Treponema pallidum (strain Nichols).